The primary structure comprises 156 residues: Cyclic pyranopterin monophosphate synthase (156 aa).

Residues 75–77 (LCH) and 111–112 (ME) contribute to the substrate site. The active site involves aspartate 126.

This sequence belongs to the MoaC family. As to quaternary structure, homohexamer; trimer of dimers.

It catalyses the reaction (8S)-3',8-cyclo-7,8-dihydroguanosine 5'-triphosphate = cyclic pyranopterin phosphate + diphosphate. It functions in the pathway cofactor biosynthesis; molybdopterin biosynthesis. Its function is as follows. Catalyzes the conversion of (8S)-3',8-cyclo-7,8-dihydroguanosine 5'-triphosphate to cyclic pyranopterin monophosphate (cPMP). The polypeptide is Cyclic pyranopterin monophosphate synthase (Corynebacterium glutamicum (strain ATCC 13032 / DSM 20300 / JCM 1318 / BCRC 11384 / CCUG 27702 / LMG 3730 / NBRC 12168 / NCIMB 10025 / NRRL B-2784 / 534)).